The sequence spans 43 residues: MEPAIVLIISVGAALVAVTGYGIYTAFGPPSRELSDPFEDHED.

The helical transmembrane segment at 4 to 24 (AIVLIISVGAALVAVTGYGIY) threads the bilayer.

It belongs to the PsbN family.

It localises to the cellular thylakoid membrane. In terms of biological role, may play a role in photosystem I and II biogenesis. The sequence is that of Protein PsbN from Trichormus variabilis (strain ATCC 29413 / PCC 7937) (Anabaena variabilis).